A 321-amino-acid polypeptide reads, in one-letter code: Lipoyl synthase (321 aa).

Residues C68, C73, C79, C94, C98, C101, and S308 each coordinate [4Fe-4S] cluster. Residues 80-297 (FNHGTATFMI…KALADELGFT (218 aa)) form the Radical SAM core domain.

It belongs to the radical SAM superfamily. Lipoyl synthase family. Requires [4Fe-4S] cluster as cofactor.

Its subcellular location is the cytoplasm. The catalysed reaction is [[Fe-S] cluster scaffold protein carrying a second [4Fe-4S](2+) cluster] + N(6)-octanoyl-L-lysyl-[protein] + 2 oxidized [2Fe-2S]-[ferredoxin] + 2 S-adenosyl-L-methionine + 4 H(+) = [[Fe-S] cluster scaffold protein] + N(6)-[(R)-dihydrolipoyl]-L-lysyl-[protein] + 4 Fe(3+) + 2 hydrogen sulfide + 2 5'-deoxyadenosine + 2 L-methionine + 2 reduced [2Fe-2S]-[ferredoxin]. It functions in the pathway protein modification; protein lipoylation via endogenous pathway; protein N(6)-(lipoyl)lysine from octanoyl-[acyl-carrier-protein]: step 2/2. In terms of biological role, catalyzes the radical-mediated insertion of two sulfur atoms into the C-6 and C-8 positions of the octanoyl moiety bound to the lipoyl domains of lipoate-dependent enzymes, thereby converting the octanoylated domains into lipoylated derivatives. The chain is Lipoyl synthase from Shewanella baltica (strain OS185).